Here is a 229-residue protein sequence, read N- to C-terminus: MSSLKKILGLKGKGKKSKKLGIAPPPYEEDTSMEYAPSAPIDKSYFGVDEMDTHDPNQLRYEKFFFTVKMTVRSNRPFRTYSDVAAAVSHWDHMYIGMAGKRPFYKILAFLGSSNLKATPAVLADRGQPEYHAHCEGRAYLPHRMGKTPPMLNVPEHFRRPFNIGLYKGTVELTMTIYDDESLEAAPMIWDHFNSSKFSDFREKALMFGLIVEKKASGAWVLDSVSHFK.

The segment covering 1-10 (MSSLKKILGL) has biased composition (low complexity). The segment at 1 to 23 (MSSLKKILGLKGKGKKSKKLGIA) is disordered. The short motif at 2–4 (SSL) is the dynamin binding element. The PPXY motif motif lies at 24 to 27 (PPPY). The PTAP/PSAP motif motif lies at 37 to 40 (PSAP).

Belongs to the vesiculoviruses matrix protein family. In terms of assembly, homomultimer. Interacts with viral nucleocapsid; this interaction contributes to the virion assembly. Interacts with the viral envelope glycoprotein; this interaction contributes to the virion assembly. Interacts with host RAE1-NUP98 complex. Interacts with host NEDD4 and TSG101. Interacts with host dynamin. Interacts with host NDUFAF4; the interaction inhibits viral propagation and is independent of interferon activation. Interacts with host GTF2H5; the interaction may inhibit host transcription. Post-translationally, phosphorylated by host.

It localises to the virion. Its subcellular location is the host endomembrane system. It is found in the host nucleus membrane. The protein resides in the host nucleus. The protein localises to the host cytoplasm. Its function is as follows. Forms a double layer around the helical nucleocapsid, the inner matrix layer binding to the N helix and the outer matrix layer binding to the envelope glycoprotein. Plays a major role in assembly and budding of virion, by recruiting cellular partners of the ESCRT complexes that play a key role in releasing the budding particle from the host membrane. Condensates the ribonucleocapsid core during virus assembly. Inhibits the host mRNA nuclear export thereby inducing the shut off of cellular transcription and preventing the interferon signaling and the establishment of antiviral state in infected cells. This shutoff presumably inhibits interferon signaling and thus establishment of antiviral state in virus infected cells. Induces cell-rounding, cytoskeleton disorganization and apoptosis in infected cell. Inhibits host transcription, possibly through interaction with host DNA repair factor IIH/TFIIH GTF2H5 subunit. In Aedes (Bovine), this protein is Matrix protein (M).